The chain runs to 355 residues: Apyrase apy-1 (355 aa).

Topologically, residues 1–6 are cytoplasmic; that stretch reads MTQESN. The helical; Signal-anchor for type II membrane protein transmembrane segment at 7–29 threads the bilayer; that stretch reads SNFFNFLLFGFVTAIAFYSGTQF. Residue N30 is glycosylated (N-linked (GlcNAc...) asparagine). Residues 30-355 lie on the Lumenal side of the membrane; sequence NKSSEQEEHI…PYKYEGIAFA (326 aa). The Ca(2+) site is built by S119, E166, and E235. A glycan (N-linked (GlcNAc...) asparagine) is linked at N291. Ca(2+) is bound at residue E350.

It belongs to the apyrase family. Requires Ca(2+) as cofactor.

It is found in the endomembrane system. The enzyme catalyses a ribonucleoside 5'-diphosphate + H2O = a ribonucleoside 5'-phosphate + phosphate + H(+). In terms of biological role, hydrolyzes UDP and to a lesser extent GDP. By preventing the accumulation of NDP, may promote the reglucosylation of incompletely folded glycoproteins in the endoplasmic reticulum following the unfolded protein response. This is Apyrase apy-1 from Caenorhabditis elegans.